The sequence spans 1040 residues: Protocadherin-10 (1040 aa).

The signal sequence occupies residues 1-18; the sequence is MIVLLLFALLWMVEGVFS. Cadherin domains follow at residues 19–122, 123–250, 251–358, 359–463, 464–574, and 582–690; these read QLHY…PPSF, PEPD…VPAF, DQPV…APEI, SFST…APRF, SQPV…APAI, and NGTP…GGGG. Residues 19–715 lie on the Extracellular side of the membrane; sequence QLHYTVQEEQ…GGGETSLDLT (697 aa). Gly residues predominate over residues 207–223; it reads GGGGGVGEGGGGGGGAG. Residues 207 to 228 are disordered; the sequence is GGGGGVGEGGGGGGGAGLPPQQ. N-linked (GlcNAc...) asparagine glycosylation is present at N273. The N-linked (GlcNAc...) asparagine glycan is linked to N557. Gly residues predominate over residues 686 to 697; that stretch reads QGGGGSGGGGSG. A disordered region spans residues 686-708; the sequence is QGGGGSGGGGSGEHQRPSRSGGG. The helical transmembrane segment at 716–736 threads the bilayer; sequence LILIIALGSVSFIFLLAMIVL. At 737 to 1040 the chain is on the cytoplasmic side; that stretch reads AVRCQKEKKL…PPYLTRKRIC (304 aa). Residues 899–927 form a disordered region; sequence AFQEADIVSSKDSGHGDSEQGDSDHDATN. The segment covering 910–926 has biased composition (basic and acidic residues); the sequence is DSGHGDSEQGDSDHDAT.

Moderately expressed in all regions of the brain examined, as well as in testis and ovary, and low expression in all other tissues tested.

The protein localises to the cell membrane. Functionally, potential calcium-dependent cell-adhesion protein. Its function is as follows. (Microbial infection) Acts as a receptor for Western equine encephalitis virus. The polypeptide is Protocadherin-10 (PCDH10) (Homo sapiens (Human)).